Consider the following 83-residue polypeptide: NAD(P)H-quinone oxidoreductase subunit L (83 aa).

The next 2 helical transmembrane spans lie at 15–35 (LLVL…VPLA) and 53–73 (LGIY…APFL).

It belongs to the complex I NdhL subunit family. As to quaternary structure, NDH-1 can be composed of about 15 different subunits; different subcomplexes with different compositions have been identified which probably have different functions.

The protein localises to the cellular thylakoid membrane. The enzyme catalyses a plastoquinone + NADH + (n+1) H(+)(in) = a plastoquinol + NAD(+) + n H(+)(out). It catalyses the reaction a plastoquinone + NADPH + (n+1) H(+)(in) = a plastoquinol + NADP(+) + n H(+)(out). Functionally, NDH-1 shuttles electrons from an unknown electron donor, via FMN and iron-sulfur (Fe-S) centers, to quinones in the respiratory and/or the photosynthetic chain. The immediate electron acceptor for the enzyme in this species is believed to be plastoquinone. Couples the redox reaction to proton translocation, and thus conserves the redox energy in a proton gradient. Cyanobacterial NDH-1 also plays a role in inorganic carbon-concentration. The protein is NAD(P)H-quinone oxidoreductase subunit L of Synechococcus sp. (strain CC9605).